A 91-amino-acid polypeptide reads, in one-letter code: Small ribosomal subunit protein uS19 (91 aa).

The protein belongs to the universal ribosomal protein uS19 family.

Functionally, protein S19 forms a complex with S13 that binds strongly to the 16S ribosomal RNA. The sequence is that of Small ribosomal subunit protein uS19 from Sulfurimonas denitrificans (strain ATCC 33889 / DSM 1251) (Thiomicrospira denitrificans (strain ATCC 33889 / DSM 1251)).